Here is a 149-residue protein sequence, read N- to C-terminus: Flavodoxin YqcA (149 aa).

The Flavodoxin-like domain maps to 4–145 (IGIFVGTMYG…ESNPWVEQWG (142 aa)). FMN contacts are provided by residues 10 to 15 (TMYGNS) and 99 to 101 (NFC).

This sequence belongs to the flavodoxin family. MioC subfamily. In terms of assembly, monomer. It depends on FMN as a cofactor.

Probable electron transporter. The chain is Flavodoxin YqcA (yqcA) from Escherichia coli (strain K12).